Here is a 375-residue protein sequence, read N- to C-terminus: Pectate lyase C (375 aa).

An N-terminal signal peptide occupies residues 1–22 (MKSLITPITAGLLLALSQPLLA). An intrachain disulfide couples Cys94 to Cys177. Positions 151, 153, 188, and 192 each coordinate Ca(2+). The active site involves Arg240. Cysteines 351 and 374 form a disulfide.

This sequence belongs to the polysaccharide lyase 1 family. PLADES subfamily. It depends on Ca(2+) as a cofactor.

It is found in the secreted. It catalyses the reaction Eliminative cleavage of (1-&gt;4)-alpha-D-galacturonan to give oligosaccharides with 4-deoxy-alpha-D-galact-4-enuronosyl groups at their non-reducing ends.. It functions in the pathway glycan metabolism; pectin degradation; 2-dehydro-3-deoxy-D-gluconate from pectin: step 2/5. Involved in maceration and soft-rotting of plant tissue. The sequence is that of Pectate lyase C from Dickeya chrysanthemi (Pectobacterium chrysanthemi).